We begin with the raw amino-acid sequence, 125 residues long: Protein ApaG (125 aa).

Residues 1–125 form the ApaG domain; the sequence is MINAPRVCVQ…FRLAIPSLIH (125 aa).

The sequence is that of Protein ApaG from Pectobacterium carotovorum subsp. carotovorum (strain PC1).